Reading from the N-terminus, the 197-residue chain is MSINVKSVIEAALFIAGNEGVHKDKLKSISRLSVQDFEAVMEEMIFEYEKDPQRGLVVRKVGENYKLFTKPDISKIVASGFGIKQKNPLNQGMIETLAIIAYNHPCTRSQIHELRKTDPTPMLEKLIEIGLVEEAGRSEAVGKPYLYQVTPKFYDIFGLDSIKDLPEIVLPEQKIEELTYEEEINFFDTNREDNGDE.

It belongs to the ScpB family. Homodimer. Homodimerization may be required to stabilize the binding of ScpA to the Smc head domains. Component of a cohesin-like complex composed of ScpA, ScpB and the Smc homodimer, in which ScpA and ScpB bind to the head domain of Smc. The presence of the three proteins is required for the association of the complex with DNA.

Its subcellular location is the cytoplasm. In terms of biological role, participates in chromosomal partition during cell division. May act via the formation of a condensin-like complex containing Smc and ScpA that pull DNA away from mid-cell into both cell halves. This is Segregation and condensation protein B from Malacoplasma penetrans (strain HF-2) (Mycoplasma penetrans).